The following is a 374-amino-acid chain: Aminomethyltransferase (374 aa).

Belongs to the GcvT family. As to quaternary structure, the glycine cleavage system is composed of four proteins: P, T, L and H.

It catalyses the reaction N(6)-[(R)-S(8)-aminomethyldihydrolipoyl]-L-lysyl-[protein] + (6S)-5,6,7,8-tetrahydrofolate = N(6)-[(R)-dihydrolipoyl]-L-lysyl-[protein] + (6R)-5,10-methylene-5,6,7,8-tetrahydrofolate + NH4(+). The glycine cleavage system catalyzes the degradation of glycine. The protein is Aminomethyltransferase of Prochlorococcus marinus (strain MIT 9313).